Here is a 78-residue protein sequence, read N- to C-terminus: D-alanyl carrier protein (78 aa).

One can recognise a Carrier domain in the interval 1-77 (MAVKEEVVEI…KVIAKVESLI (77 aa)). Position 35 is an O-(pantetheine 4'-phosphoryl)serine (Ser35).

Belongs to the DltC family. 4'-phosphopantetheine is transferred from CoA to a specific serine of apo-DCP.

It localises to the cytoplasm. Its pathway is cell wall biogenesis; lipoteichoic acid biosynthesis. Its function is as follows. Carrier protein involved in the D-alanylation of lipoteichoic acid (LTA). The loading of thioester-linked D-alanine onto DltC is catalyzed by D-alanine--D-alanyl carrier protein ligase DltA. The DltC-carried D-alanyl group is further transferred to cell membrane phosphatidylglycerol (PG) by forming an ester bond, probably catalyzed by DltD. D-alanylation of LTA plays an important role in modulating the properties of the cell wall in Gram-positive bacteria, influencing the net charge of the cell wall. The protein is D-alanyl carrier protein of Leuconostoc citreum (strain KM20).